Here is a 296-residue protein sequence, read N- to C-terminus: Inactive uridine phosphorylase B (296 aa).

It belongs to the PNP/UDP phosphorylase family. In terms of assembly, homodimer.

This is Inactive uridine phosphorylase B from Schistosoma mansoni (Blood fluke).